A 213-amino-acid polypeptide reads, in one-letter code: Uridine kinase (213 aa).

15 to 22 serves as a coordination point for ATP; the sequence is GASASGKS.

The protein belongs to the uridine kinase family.

The protein localises to the cytoplasm. The enzyme catalyses uridine + ATP = UMP + ADP + H(+). The catalysed reaction is cytidine + ATP = CMP + ADP + H(+). Its pathway is pyrimidine metabolism; CTP biosynthesis via salvage pathway; CTP from cytidine: step 1/3. The protein operates within pyrimidine metabolism; UMP biosynthesis via salvage pathway; UMP from uridine: step 1/1. This is Uridine kinase from Salmonella agona (strain SL483).